Reading from the N-terminus, the 572-residue chain is Sulfite reductase [NADPH] hemoprotein beta-component (572 aa).

Residues C437, C443, C482, and C486 each coordinate [4Fe-4S] cluster. C486 contacts siroheme.

Belongs to the nitrite and sulfite reductase 4Fe-4S domain family. In terms of assembly, alpha(8)-beta(8). The alpha component is a flavoprotein, the beta component is a hemoprotein. Requires siroheme as cofactor. [4Fe-4S] cluster serves as cofactor.

The catalysed reaction is hydrogen sulfide + 3 NADP(+) + 3 H2O = sulfite + 3 NADPH + 4 H(+). It functions in the pathway sulfur metabolism; hydrogen sulfide biosynthesis; hydrogen sulfide from sulfite (NADPH route): step 1/1. In terms of biological role, component of the sulfite reductase complex that catalyzes the 6-electron reduction of sulfite to sulfide. This is one of several activities required for the biosynthesis of L-cysteine from sulfate. This is Sulfite reductase [NADPH] hemoprotein beta-component from Lysinibacillus sphaericus (strain C3-41).